The primary structure comprises 1489 residues: Type-2 histone deacetylase 1 (1489 aa).

4 stretches are compositionally biased toward low complexity: residues 135-163 (NNNNINNNNNSNGSNSSNNSHNGGSSPSG), 190-259 (SNGN…SRNL), 281-306 (NIINNNSNNNTNNNNNIMNGTTTSTT), and 325-399 (SPTS…NINN). Disordered stretches follow at residues 135-259 (NNNN…SRNL), 281-556 (NIIN…NYQQ), 915-935 (NNNNNNNNNNNNNNNEEDDQL), 955-1024 (NISK…RDRD), and 1151-1185 (STGINQFSTSTPITTTGTATVTPGSTTSSTNGEQC). Residues 400 to 430 (VANGTPRPSLQTSRLQGKLPSPQQYNTSPSH) show a composition bias toward polar residues. Low complexity-rich tracts occupy residues 431–450 (QQYPSPKNNNNSNNIIPIQS), 486–553 (NNNN…NNSN), 915–928 (NNNNNNNNNNNNNN), and 959–988 (NNNNNNNNNNNNNNNNNNNNNNNNNNNNNN). Composition is skewed to basic and acidic residues over residues 989-1001 (RNRDRDREFERDN) and 1010-1024 (IEKERNRNNRIRDRD). Low complexity predominate over residues 1158–1180 (STSTPITTTGTATVTPGSTTSST). Histidine 1232 acts as the Proton acceptor in catalysis. Acidic residues predominate over residues 1325-1335 (EQNDYDDDDNN). Residues 1325–1374 (EQNDYDDDDNNNDVNNNNNNNNNNNNNNNNNNNNKNNNNNNSNSITQQST) form a disordered region. Low complexity predominate over residues 1336–1367 (NDVNNNNNNNNNNNNNNNNNNNNKNNNNNNSN).

The protein belongs to the histone deacetylase family. HD type 2 subfamily.

It is found in the nucleus. It localises to the cytoplasm. It carries out the reaction N(6)-acetyl-L-lysyl-[histone] + H2O = L-lysyl-[histone] + acetate. In terms of biological role, responsible for the deacetylation of lysine residues on the N-terminal part of the core histones (H2A, H2B, H3 and H4). Histone deacetylation plays an important role in transcriptional regulation, cell cycle progression and developmental events. Histone deacetylases act via the formation of large multiprotein complexes. This chain is Type-2 histone deacetylase 1 (hdaD), found in Dictyostelium discoideum (Social amoeba).